A 322-amino-acid polypeptide reads, in one-letter code: Deoxyhypusine hydroxylase (322 aa).

Fe cation contacts are provided by His-78, Glu-79, His-111, and Glu-112. 4 HEAT-like PBS-type repeats span residues 109–135 (VRHE…CLKN), 203–229 (LRYR…GFND), 234–260 (FKHE…VLGR), and 267–293 (VRHE…YLND). Fe cation contacts are provided by His-236, Glu-237, His-269, and Glu-270.

It belongs to the deoxyhypusine hydroxylase family. Requires Fe(2+) as cofactor.

Its subcellular location is the cytoplasm. The protein localises to the nucleus. It catalyses the reaction [eIF5A protein]-deoxyhypusine + AH2 + O2 = [eIF5A protein]-hypusine + A + H2O. The protein operates within protein modification; eIF5A hypusination. In terms of biological role, catalyzes the hydroxylation of the N(6)-(4-aminobutyl)-L-lysine intermediate to form hypusine, an essential post-translational modification only found in mature eIF-5A factor. This is Deoxyhypusine hydroxylase from Candida glabrata (strain ATCC 2001 / BCRC 20586 / JCM 3761 / NBRC 0622 / NRRL Y-65 / CBS 138) (Yeast).